The chain runs to 254 residues: Probable phosphomannomutase (254 aa).

Asp14 acts as the Nucleophile in catalysis. Mg(2+) is bound by residues Asp14 and Asp16. Residue Asp16 is the Proton donor/acceptor of the active site. Alpha-D-mannose 1-phosphate contacts are provided by Arg23, Arg129, Arg140, Arg147, Ser185, and Asp187. Mg(2+) is bound by residues Asp214, Phe226, Asp228, and Thr231.

This sequence belongs to the eukaryotic PMM family. As to quaternary structure, homodimer.

It is found in the cytoplasm. The enzyme catalyses alpha-D-mannose 1-phosphate = D-mannose 6-phosphate. It participates in nucleotide-sugar biosynthesis; GDP-alpha-D-mannose biosynthesis; alpha-D-mannose 1-phosphate from D-fructose 6-phosphate: step 2/2. Functionally, involved in the synthesis of the GDP-mannose and dolichol-phosphate-mannose required for a number of critical mannosyl transfer reactions. This is Probable phosphomannomutase from Caenorhabditis elegans.